The sequence spans 249 residues: ATP synthase subunit a (249 aa).

5 helical membrane-spanning segments follow: residues 35–55 (ILLTSWFVIALILLAAFISSL), 92–112 (VPFIGTLFLFIFVSNWSGALV), 131–151 (INTTVALALLTSIAYFYAGIS), 187–209 (LFGNILADELVVGVLVLLVPLFI), and 221–241 (SAIQALIFATLAANYIGEALE).

Belongs to the ATPase A chain family. In terms of assembly, F-type ATPases have 2 components, CF(1) - the catalytic core - and CF(0) - the membrane proton channel. CF(1) has five subunits: alpha(3), beta(3), gamma(1), delta(1), epsilon(1). CF(0) has four main subunits: a, b, b' and c.

Its subcellular location is the cellular thylakoid membrane. In terms of biological role, key component of the proton channel; it plays a direct role in the translocation of protons across the membrane. The protein is ATP synthase subunit a of Trichodesmium erythraeum (strain IMS101).